The following is a 140-amino-acid chain: Large ribosomal subunit protein bL17 (140 aa).

It belongs to the bacterial ribosomal protein bL17 family. In terms of assembly, part of the 50S ribosomal subunit. Contacts protein L32.

This Beijerinckia indica subsp. indica (strain ATCC 9039 / DSM 1715 / NCIMB 8712) protein is Large ribosomal subunit protein bL17.